The sequence spans 280 residues: Myb family transcription factor PHL11 (280 aa).

In terms of domain architecture, HTH myb-type spans Arg-20–Gln-80. Residues Pro-51 to Arg-76 constitute a DNA-binding region (H-T-H motif). The segment at Leu-77–Ser-98 is disordered. The segment at Ala-129 to Gln-149 is coiled coil. The short motif at Phe-142–Glu-147 is the LHEQLE element.

It belongs to the MYB-CC family.

Its subcellular location is the nucleus. This Arabidopsis thaliana (Mouse-ear cress) protein is Myb family transcription factor PHL11.